Consider the following 154-residue polypeptide: 6,7-dimethyl-8-ribityllumazine synthase (154 aa).

5-amino-6-(D-ribitylamino)uracil is bound by residues F22, 56-58, and 80-82; these read AFE and TVI. 85-86 provides a ligand contact to (2S)-2-hydroxy-3-oxobutyl phosphate; sequence AT. Catalysis depends on H88, which acts as the Proton donor. F113 lines the 5-amino-6-(D-ribitylamino)uracil pocket. R127 is a binding site for (2S)-2-hydroxy-3-oxobutyl phosphate.

The protein belongs to the DMRL synthase family. As to quaternary structure, forms an icosahedral capsid composed of 60 subunits, arranged as a dodecamer of pentamers.

The catalysed reaction is (2S)-2-hydroxy-3-oxobutyl phosphate + 5-amino-6-(D-ribitylamino)uracil = 6,7-dimethyl-8-(1-D-ribityl)lumazine + phosphate + 2 H2O + H(+). Its pathway is cofactor biosynthesis; riboflavin biosynthesis; riboflavin from 2-hydroxy-3-oxobutyl phosphate and 5-amino-6-(D-ribitylamino)uracil: step 1/2. In terms of biological role, catalyzes the formation of 6,7-dimethyl-8-ribityllumazine by condensation of 5-amino-6-(D-ribitylamino)uracil with 3,4-dihydroxy-2-butanone 4-phosphate. This is the penultimate step in the biosynthesis of riboflavin. This is 6,7-dimethyl-8-ribityllumazine synthase from Bacillus amyloliquefaciens (Bacillus velezensis).